A 212-amino-acid polypeptide reads, in one-letter code: uncharacterized protein (212 aa).

Pentapeptide repeat domains are found at residues 63 to 102, 103 to 142, and 143 to 182; these read VSFR…KMVG, MNVA…ALMQ, and SECS…RFEQ.

This is an uncharacterized protein from Bacillus subtilis (strain 168).